Reading from the N-terminus, the 950-residue chain is Glycine dehydrogenase (decarboxylating) (950 aa).

An N6-(pyridoxal phosphate)lysine modification is found at K699.

The protein belongs to the GcvP family. As to quaternary structure, the glycine cleavage system is composed of four proteins: P, T, L and H. The cofactor is pyridoxal 5'-phosphate.

It catalyses the reaction N(6)-[(R)-lipoyl]-L-lysyl-[glycine-cleavage complex H protein] + glycine + H(+) = N(6)-[(R)-S(8)-aminomethyldihydrolipoyl]-L-lysyl-[glycine-cleavage complex H protein] + CO2. Functionally, the glycine cleavage system catalyzes the degradation of glycine. The P protein binds the alpha-amino group of glycine through its pyridoxal phosphate cofactor; CO(2) is released and the remaining methylamine moiety is then transferred to the lipoamide cofactor of the H protein. The sequence is that of Glycine dehydrogenase (decarboxylating) from Chromobacterium violaceum (strain ATCC 12472 / DSM 30191 / JCM 1249 / CCUG 213 / NBRC 12614 / NCIMB 9131 / NCTC 9757 / MK).